A 200-amino-acid chain; its full sequence is Inner membrane-spanning protein YciB (200 aa).

Transmembrane regions (helical) follow at residues 1 to 21 (MPPL…FFAN), 37 to 57 (IGAP…IALA), 66 to 86 (LPIM…LTLW), 103 to 123 (LFGG…GYVF), 136 to 156 (KLTL…EIVW), and 167 to 187 (FKVW…MPLI).

It belongs to the YciB family.

The protein localises to the cell inner membrane. In terms of biological role, plays a role in cell envelope biogenesis, maintenance of cell envelope integrity and membrane homeostasis. The protein is Inner membrane-spanning protein YciB of Brucella suis biovar 1 (strain 1330).